Here is an 818-residue protein sequence, read N- to C-terminus: Hillarin (818 aa).

Residues 9 to 76 (STCLRCSETV…SSHVPKSGPG (68 aa)) form the LIM zinc-binding domain. Positions 97–141 (FVNEQIRGTRSEVDGGPLGGSRQSTPNGYGSREISSPSQNDSDYK) are disordered. The segment covering 117 to 137 (SRQSTPNGYGSREISSPSQND) has biased composition (polar residues). A coiled-coil region spans residues 216 to 272 (QDEWERELQRLTHKFEKELATSRRSRDEANILTMRHEQQKEDLEKNMTLRRSKKKES).

This sequence belongs to the transglutaminase-like superfamily. In terms of assembly, interacts with pnut. In terms of tissue distribution, localizes to the neuropil of the embryonic central nervous system (at protein level). Also detected in third instar larval brain (at protein level).

The protein resides in the cytoplasm. It localises to the cell cortex. It is found in the cleavage furrow. May act as a modulator of septin function during cytokinesis in the developing nervous system. The polypeptide is Hillarin (Drosophila melanogaster (Fruit fly)).